Here is a 208-residue protein sequence, read N- to C-terminus: Small ribosomal subunit protein uS4 (208 aa).

Positions 95-159 (TIIDNIVYRA…LKKLIGSNIE (65 aa)) constitute an S4 RNA-binding domain.

The protein belongs to the universal ribosomal protein uS4 family. As to quaternary structure, part of the 30S ribosomal subunit. Contacts protein S5. The interaction surface between S4 and S5 is involved in control of translational fidelity.

In terms of biological role, one of the primary rRNA binding proteins, it binds directly to 16S rRNA where it nucleates assembly of the body of the 30S subunit. With S5 and S12 plays an important role in translational accuracy. The sequence is that of Small ribosomal subunit protein uS4 from Borreliella afzelii (strain PKo) (Borrelia afzelii).